The primary structure comprises 359 residues: F-box protein At5g49610 (359 aa).

Residues 3-52 (NQKGALFPDEVILQILARLPVKSLFRFKSVCKSWYRLPSDKYFTSLFNQL) form the F-box domain.

Part of a SCF (SKP1-cullin-F-box) protein ligase complex. Interacts with SKP1A, SKP1B, ASK11, ASK12, ASK13 and ASK14.

The protein operates within protein modification; protein ubiquitination. The chain is F-box protein At5g49610 from Arabidopsis thaliana (Mouse-ear cress).